We begin with the raw amino-acid sequence, 305 residues long: Dihydroorotate dehydrogenase B (NAD(+)), catalytic subunit (305 aa).

Residues S23 and 47–48 contribute to the FMN site; that span reads KG. Residues K47 and 71–75 each bind substrate; that span reads NAIGL. Residues N101 and N129 each contribute to the FMN site. Residue N129 coordinates substrate. C132 functions as the Nucleophile in the catalytic mechanism. K167 and I193 together coordinate FMN. 194-195 contacts substrate; sequence NT. Residues G219, 245 to 246, and 267 to 268 contribute to the FMN site; these read GG and GT.

This sequence belongs to the dihydroorotate dehydrogenase family. Type 1 subfamily. As to quaternary structure, heterotetramer of 2 PyrK and 2 PyrD type B subunits. It depends on FMN as a cofactor.

The protein localises to the cytoplasm. The enzyme catalyses (S)-dihydroorotate + NAD(+) = orotate + NADH + H(+). The protein operates within pyrimidine metabolism; UMP biosynthesis via de novo pathway; orotate from (S)-dihydroorotate (NAD(+) route): step 1/1. Functionally, catalyzes the conversion of dihydroorotate to orotate with NAD(+) as electron acceptor. This chain is Dihydroorotate dehydrogenase B (NAD(+)), catalytic subunit (pyrD), found in Geobacter sp. (strain M21).